A 452-amino-acid polypeptide reads, in one-letter code: Phosphoglucosamine mutase (452 aa).

Residue Ser-103 is the Phosphoserine intermediate of the active site. Residues Ser-103, Asp-243, Asp-245, and Asp-247 each contribute to the Mg(2+) site. Ser-103 carries the phosphoserine modification.

This sequence belongs to the phosphohexose mutase family. Mg(2+) serves as cofactor. Activated by phosphorylation.

The catalysed reaction is alpha-D-glucosamine 1-phosphate = D-glucosamine 6-phosphate. Its function is as follows. Catalyzes the conversion of glucosamine-6-phosphate to glucosamine-1-phosphate. The protein is Phosphoglucosamine mutase of Limosilactobacillus fermentum (strain NBRC 3956 / LMG 18251) (Lactobacillus fermentum).